A 260-amino-acid chain; its full sequence is GDSL esterase/lipase WDL1 (260 aa).

The signal sequence occupies residues 1 to 35 (MLGFAPAPGRPLFVLFGSSIVQFSFSNGGWGAALA). Ser-18 (nucleophile) is an active-site residue. Asn-83 and Asn-150 each carry an N-linked (GlcNAc...) asparagine glycan. Catalysis depends on residues Asp-191 and His-194.

Belongs to the 'GDSL' lipolytic enzyme family. Highly expressed in panicles. Expressed in shoots, mature flowers and seeds.

It is found in the endoplasmic reticulum. Its function is as follows. Involved in the organization of leaf cuticle and wax crystals. This chain is GDSL esterase/lipase WDL1, found in Oryza sativa subsp. japonica (Rice).